A 2215-amino-acid chain; its full sequence is Unconventional myosin-VIIa (2215 aa).

The region spanning 65–741 (HGVEDMIRLG…HDMLLEVERD (677 aa)) is the Myosin motor domain. Residue 158–165 (GESGAGKT) participates in ATP binding. Residues 632-639 (FVRCIKPN) form an actin-binding region. IQ domains follow at residues 745 to 765 (TDRV…SNFL), 768 to 788 (KSAA…KNYE), 791 to 811 (RLGF…KQYR), 814 to 834 (RQRI…KAFR), and 837 to 857 (LWAV…RLHR). Residues 858-935 (RLRVEYQRRL…LEQMEKARHE (78 aa)) form an SAH region. The 237-residue stretch at 1017 to 1253 (YTRRPLKQPL…PSWLELQATK (237 aa)) folds into the MyTH4 1 domain. Residues 1258 to 1602 (IMLPVTFMDG…LVVTFLEGLR (345 aa)) enclose the FERM 1 domain. Position 1563 is a phosphothreonine (Thr1563). Ser1569 is modified (phosphoserine). A Phosphothreonine modification is found at Thr1571. The region spanning 1603–1672 (KRSKYVVALQ…PTDCVYVMPT (70 aa)) is the SH3 domain. In terms of domain architecture, MyTH4 2 spans 1747–1896 (HTREPLKQAL…PHLVEVEAIQ (150 aa)). An FERM 2 domain is found at 1902 to 2205 (IFHKVYFPDD…SYISQMLTAM (304 aa)).

The protein belongs to the TRAFAC class myosin-kinesin ATPase superfamily. Myosin family. Might homodimerize in a two headed molecule through the formation of a coiled-coil rod. Identified in a complex with USH1C and USH1G. Interacts with MYRIP. Interacts with RPE65. Interacts with CIB2. May interact with CALM. Interacts with WHRN. Interacts with PLEKHB1 (via PH domain). Interacts with PCDH15. Interacts with TWF2. Interacts with USH1G. Interacts with MYH9. Interacts (via MyTH4-FERM domains) with cytoplasmic regions of ADGRV1 and USH2A. Interacts with PDZD7 (via MyTH4-FERM domains). Interacts with CALML4. As to expression, detected in mechanosensory stereocilia of cochlea hair cells (at protein level). Expressed in the retina, cochlea, kidney and liver.

The protein resides in the cytoplasm. It is found in the cell cortex. It localises to the cytoskeleton. The protein localises to the synapse. Its function is as follows. Myosins are actin-based motor molecules with ATPase activity. Unconventional myosins serve in intracellular movements. Their highly divergent tails bind to membranous compartments, which are then moved relative to actin filaments. In the retina, plays an important role in the renewal of the outer photoreceptor disks. Plays an important role in the distribution and migration of retinal pigment epithelial (RPE) melanosomes and phagosomes, and in the regulation of opsin transport in retinal photoreceptors. Mediates intracellular transport of RPE65 in the retina pigment epithelium. In the inner ear, plays an important role in differentiation, morphogenesis and organization of cochlear hair cell bundles. Motor protein that is a part of the functional network formed by USH1C, USH1G, CDH23 and MYO7A that mediates mechanotransduction in cochlear hair cells. Required for normal hearing. Involved in hair-cell vesicle trafficking of aminoglycosides, which are known to induce ototoxicity. The sequence is that of Unconventional myosin-VIIa (Myo7a) from Mus musculus (Mouse).